Consider the following 169-residue polypeptide: MTNLAFQSSSQIQGRLSAWLVTHKLPHRPLGFDYQGVETIEVRPEDWPSVAVALYVYGFNYLRCQCAYDVAPGGALASVYHLTKVEDVADQPEELCVKLFVSRNNPSVPSSFWIWKSADFQERECYDMFGIVYKNHPHLKRILMPESWLGWPLRKDYITPDFYELQDAY.

This sequence belongs to the complex I 30 kDa subunit family. As to quaternary structure, NDH is composed of at least 16 different subunits, 5 of which are encoded in the nucleus.

It localises to the plastid. The protein resides in the chloroplast thylakoid membrane. It catalyses the reaction a plastoquinone + NADH + (n+1) H(+)(in) = a plastoquinol + NAD(+) + n H(+)(out). The enzyme catalyses a plastoquinone + NADPH + (n+1) H(+)(in) = a plastoquinol + NADP(+) + n H(+)(out). Functionally, NDH shuttles electrons from NAD(P)H:plastoquinone, via FMN and iron-sulfur (Fe-S) centers, to quinones in the photosynthetic chain and possibly in a chloroplast respiratory chain. The immediate electron acceptor for the enzyme in this species is believed to be plastoquinone. Couples the redox reaction to proton translocation, and thus conserves the redox energy in a proton gradient. This is NAD(P)H-quinone oxidoreductase subunit J, chloroplastic from Zygnema circumcarinatum (Green alga).